Reading from the N-terminus, the 200-residue chain is Holliday junction branch migration complex subunit RuvA (200 aa).

Residues 1-63 (MYAYIKGTLT…EDAQLLYGFI (63 aa)) are domain I. The tract at residues 64–142 (NQEEKDMFLS…INDVDSSQIL (79 aa)) is domain II. A flexible linker region spans residues 143–149 (NTDTQDH). The domain III stretch occupies residues 150 to 200 (ANAPIIKEALLALEALGYSKRELTKVEKSLSKETFDSVDDAVKRGLQLLIA).

Belongs to the RuvA family. In terms of assembly, homotetramer. Forms an RuvA(8)-RuvB(12)-Holliday junction (HJ) complex. HJ DNA is sandwiched between 2 RuvA tetramers; dsDNA enters through RuvA and exits via RuvB. An RuvB hexamer assembles on each DNA strand where it exits the tetramer. Each RuvB hexamer is contacted by two RuvA subunits (via domain III) on 2 adjacent RuvB subunits; this complex drives branch migration. In the full resolvosome a probable DNA-RuvA(4)-RuvB(12)-RuvC(2) complex forms which resolves the HJ.

It localises to the cytoplasm. In terms of biological role, the RuvA-RuvB-RuvC complex processes Holliday junction (HJ) DNA during genetic recombination and DNA repair, while the RuvA-RuvB complex plays an important role in the rescue of blocked DNA replication forks via replication fork reversal (RFR). RuvA specifically binds to HJ cruciform DNA, conferring on it an open structure. The RuvB hexamer acts as an ATP-dependent pump, pulling dsDNA into and through the RuvAB complex. HJ branch migration allows RuvC to scan DNA until it finds its consensus sequence, where it cleaves and resolves the cruciform DNA. In Staphylococcus saprophyticus subsp. saprophyticus (strain ATCC 15305 / DSM 20229 / NCIMB 8711 / NCTC 7292 / S-41), this protein is Holliday junction branch migration complex subunit RuvA.